Here is a 250-residue protein sequence, read N- to C-terminus: Leucyl/phenylalanyl-tRNA--protein transferase (250 aa).

Belongs to the L/F-transferase family.

It localises to the cytoplasm. The enzyme catalyses N-terminal L-lysyl-[protein] + L-leucyl-tRNA(Leu) = N-terminal L-leucyl-L-lysyl-[protein] + tRNA(Leu) + H(+). It catalyses the reaction N-terminal L-arginyl-[protein] + L-leucyl-tRNA(Leu) = N-terminal L-leucyl-L-arginyl-[protein] + tRNA(Leu) + H(+). It carries out the reaction L-phenylalanyl-tRNA(Phe) + an N-terminal L-alpha-aminoacyl-[protein] = an N-terminal L-phenylalanyl-L-alpha-aminoacyl-[protein] + tRNA(Phe). Its function is as follows. Functions in the N-end rule pathway of protein degradation where it conjugates Leu, Phe and, less efficiently, Met from aminoacyl-tRNAs to the N-termini of proteins containing an N-terminal arginine or lysine. In Bordetella avium (strain 197N), this protein is Leucyl/phenylalanyl-tRNA--protein transferase.